The chain runs to 535 residues: Protein translocase subunit SecD (535 aa).

A run of 6 helical transmembrane segments spans residues 5-25 (LTWK…GIIG), 377-397 (AIIG…GAGI), 402-421 (SLLL…GAVL), 425-444 (GIAG…VLIF), 469-489 (WLTI…LFLF), and 496-516 (GFAV…VFVS).

This sequence belongs to the SecD/SecF family. SecD subfamily. As to quaternary structure, forms a complex with SecF. Part of the essential Sec protein translocation apparatus which comprises SecA, SecYEG and auxiliary proteins SecDF. Other proteins may also be involved.

The protein localises to the cell inner membrane. Its function is as follows. Part of the Sec protein translocase complex. Interacts with the SecYEG preprotein conducting channel. SecDF uses the proton motive force (PMF) to complete protein translocation after the ATP-dependent function of SecA. The protein is Protein translocase subunit SecD of Koribacter versatilis (strain Ellin345).